Here is a 139-residue protein sequence, read N- to C-terminus: Putative general secretion pathway protein B (139 aa).

The chain crosses the membrane as a helical span at residues 28 to 48 (IIYVICLLLICLWFAGMVLVG). The tract at residues 93–139 (VEEEDDPGVAVENAPSSSEDEENTVEESEEKAGLRERVKNALNELER) is disordered. The segment covering 110 to 121 (SEDEENTVEESE) has biased composition (acidic residues). Positions 122–139 (EKAGLRERVKNALNELER) are enriched in basic and acidic residues.

It is found in the cell membrane. Functionally, part of a cryptic operon that encodes proteins involved in type II secretion pathway in other organisms, but is not expressed in strain K12 under standard laboratory conditions. May play a regulatory role under conditions of derepressed gsp gene expression. In Escherichia coli (strain K12), this protein is Putative general secretion pathway protein B.